A 54-amino-acid chain; its full sequence is MLLCFHMCQRIMWLPFDLMKWRRFHCGAVLVGTLSLRNRSPKILSLYFISDRTG.

The signal sequence occupies residues 1-13 (MLLCFHMCQRIMW).

Its subcellular location is the secreted. This is an uncharacterized protein from Saccharomyces cerevisiae (strain ATCC 204508 / S288c) (Baker's yeast).